The primary structure comprises 324 residues: Protoheme IX farnesyltransferase (324 aa).

9 consecutive transmembrane segments (helical) span residues 31–51, 53–73, 104–124, 125–145, 153–173, 181–201, 222–242, 243–263, and 285–305; these read LIVL…RGEV, PVLA…ANTI, LVFA…CANL, LSAC…THWL, IVIG…AVTG, VLFA…AMLI, TAWQ…LLVY, PLHA…VVFI, and FSIL…LPLT.

The protein belongs to the UbiA prenyltransferase family. Protoheme IX farnesyltransferase subfamily.

It is found in the cell inner membrane. It catalyses the reaction heme b + (2E,6E)-farnesyl diphosphate + H2O = Fe(II)-heme o + diphosphate. Its pathway is porphyrin-containing compound metabolism; heme O biosynthesis; heme O from protoheme: step 1/1. In terms of biological role, converts heme B (protoheme IX) to heme O by substitution of the vinyl group on carbon 2 of heme B porphyrin ring with a hydroxyethyl farnesyl side group. The protein is Protoheme IX farnesyltransferase of Cyanothece sp. (strain PCC 7425 / ATCC 29141).